The following is a 400-amino-acid chain: Nicotinate phosphoribosyltransferase (400 aa).

Histidine 220 is modified (phosphohistidine; by autocatalysis).

The protein belongs to the NAPRTase family. Post-translationally, transiently phosphorylated on a His residue during the reaction cycle. Phosphorylation strongly increases the affinity for substrates and increases the rate of nicotinate D-ribonucleotide production. Dephosphorylation regenerates the low-affinity form of the enzyme, leading to product release.

The catalysed reaction is nicotinate + 5-phospho-alpha-D-ribose 1-diphosphate + ATP + H2O = nicotinate beta-D-ribonucleotide + ADP + phosphate + diphosphate. It participates in cofactor biosynthesis; NAD(+) biosynthesis; nicotinate D-ribonucleotide from nicotinate: step 1/1. Catalyzes the synthesis of beta-nicotinate D-ribonucleotide from nicotinate and 5-phospho-D-ribose 1-phosphate at the expense of ATP. In Escherichia coli O157:H7, this protein is Nicotinate phosphoribosyltransferase.